We begin with the raw amino-acid sequence, 242 residues long: tRNA pseudouridine synthase A (242 aa).

D51 functions as the Nucleophile in the catalytic mechanism. Y107 provides a ligand contact to substrate.

This sequence belongs to the tRNA pseudouridine synthase TruA family. As to quaternary structure, homodimer.

The enzyme catalyses uridine(38/39/40) in tRNA = pseudouridine(38/39/40) in tRNA. In terms of biological role, formation of pseudouridine at positions 38, 39 and 40 in the anticodon stem and loop of transfer RNAs. The polypeptide is tRNA pseudouridine synthase A (Helicobacter pylori (strain Shi470)).